A 233-amino-acid chain; its full sequence is B-cell lymphoma/leukemia 10 (233 aa).

M1 carries the N-acetylmethionine modification. Residues 13–101 form the CARD domain; the sequence is LTEVKKDALE…QNFLIQKITD (89 aa). Glycyl lysine isopeptide (Lys-Gly) (interchain with G-Cter in ubiquitin) cross-links involve residues K17, K31, and K63. A Phosphoserine modification is found at S138. Positions 187 to 233 are disordered; that stretch reads FSSTTLPRPGDPGAPPLPPDLQLEEEGTCANSSEMFLPLRSRTVSRQ. Positions 195 to 205 are enriched in pro residues; sequence PGDPGAPPLPP.

Homomultimer; homooligomerized following recruitment by CARD domain-containing proteins that form a nucleating helical template that recruits BCL10 via CARD-CARD interaction. Self-associates by CARD-CARD interaction and interacts with other CARD-proteins such as CARD9, CARD10, CARD11 and CARD14. Forms a complex with CARD14 and MALT1; resulting in the formation of a CBM (CARD14-BCL10-MALT1) complex. Forms a complex with CARD11 and MALT1; resulting in the formation of a CBM (CARD11-BCL10-MALT1) complex. Forms a complex with CARD9 and MALT1; resulting in the formation of a CBM (CARD9-BCL10-MALT1) complex. Found in a membrane raft complex, at least composed of BCL10, CARD11, DPP4 and IKBKB. Binds caspase-9 with its C-terminal domain. Interacts with TRAF2 and BIRC2/c-IAP2. Interacts with PELI2 and SOCS3; these interactions may be mutually exclusive. Post-translationally, phosphorylated. Phosphorylation results in dissociation from TRAF2 and binding to BIRC2/c-IAP2. Phosphorylated by IKBKB/IKKB. Ubiquitinated via both 'Lys-63'-linked and linear ('Met-1'-linked) polyubiquitin chains in response to T-cell receptor (TCR) activation. Ubiquitination is recognized by IKBKG/NEMO, the regulatory subunit of I-kappa-B kinase (IKK), and is required for TCR-induced NF-kappa-B activation. Linear ubiquitination at Lys-17, Lys-31 and Lys-63 is mediated by RNF31/HOIP; linear ubiquitination is recognized with much higher affinity than 'Lys-63'-linked ubiquitin by IKBKG/NEMO. CARD11 is required for linear ubiquitination by HOIP by promoting the targeting of BCL10 to RNF31/HOIP. In terms of processing, proteolytically cleaved by MALT1; required for T-cell activation. As to expression, ubiquitous.

The protein resides in the cytoplasm. The protein localises to the perinuclear region. It localises to the membrane raft. Its function is as follows. Plays a key role in both adaptive and innate immune signaling by bridging CARD domain-containing proteins to immune activation. Acts by channeling adaptive and innate immune signaling downstream of CARD domain-containing proteins CARD9, CARD11 and CARD14 to activate NF-kappa-B and MAP kinase p38 (MAPK11, MAPK12, MAPK13 and/or MAPK14) pathways which stimulate expression of genes encoding pro-inflammatory cytokines and chemokines. Recruited by activated CARD domain-containing proteins: homooligomerized CARD domain-containing proteins form a nucleating helical template that recruits BCL10 via CARD-CARD interaction, thereby promoting polymerization of BCL10, subsequent recruitment of MALT1 and formation of a CBM complex. This leads to activation of NF-kappa-B and MAP kinase p38 (MAPK11, MAPK12, MAPK13 and/or MAPK14) pathways which stimulate expression of genes encoding pro-inflammatory cytokines and chemokines. Activated by CARD9 downstream of C-type lectin receptors; CARD9-mediated signals are essential for antifungal immunity. Activated by CARD11 downstream of T-cell receptor (TCR) and B-cell receptor (BCR). Promotes apoptosis, pro-caspase-9 maturation and activation of NF-kappa-B via NIK and IKK. The sequence is that of B-cell lymphoma/leukemia 10 from Homo sapiens (Human).